The sequence spans 108 residues: uncharacterized protein (108 aa).

3 helical membrane passes run 24–44, 55–75, and 88–108; these read LWITLVLTLFFTIVEIVGGLL, AHMASDVLALGLSMIALYLAM, and RFEIITSFLNGLTLAIISIGI.

It to cation A.eutrophus efflux system protein CzcD.

It is found in the cell membrane. This is an uncharacterized protein from Geobacillus stearothermophilus (Bacillus stearothermophilus).